A 521-amino-acid chain; its full sequence is Ribonuclease Y (521 aa).

The chain crosses the membrane as a helical span at residues L10–L30. Residues T210–L270 enclose the KH domain. The HD domain occupies V336 to A430.

The protein belongs to the RNase Y family.

The protein resides in the cell membrane. Functionally, endoribonuclease that initiates mRNA decay. The sequence is that of Ribonuclease Y from Caldicellulosiruptor saccharolyticus (strain ATCC 43494 / DSM 8903 / Tp8T 6331).